We begin with the raw amino-acid sequence, 463 residues long: Vacuolar cation/proton exchanger 1 (463 aa).

A2 carries the post-translational modification N-acetylalanine. The Cytoplasmic portion of the chain corresponds to 2–68 (AGIVTEPWSV…LKDFLSNLQE (67 aa)). The required for autoinhibitory regulation stretch occupies residues 25–33 (SRELRLGRT). The tract at residues 56–62 (YKGLKDF) is required for interaction with autoinhibitory region. Residues 69 to 89 (VILGTKLAILFPAIPAAIICT) traverse the membrane as a helical segment. The interval 87-95 (ICTYCGVSQ) is required for Ca(2+)/H(+) exchange activity. Over 90–96 (YCGVSQP) the chain is Extracellular. A helical transmembrane segment spans residues 97–116 (WIFGLSLLGLTPLAERVSFL). At 117 to 127 (TEQLAFYTGPT) the chain is on the cytoplasmic side. Residues 128–148 (LGGLLNATCGNATELIIAILA) form a helical membrane-spanning segment. The cation selection stretch occupies residues 137 to 172 (GNATELIIAILALTNNKVAVVKYSLLGSILSNLLLV). Topologically, residues 149-161 (LTNNKVAVVKYSL) are extracellular. A helical transmembrane segment spans residues 162–182 (LGSILSNLLLVLGTSLFCGGI). Residues 183–197 (ANIRREQRFDRKQAD) are Cytoplasmic-facing. A helical transmembrane segment spans residues 198-218 (VNFFLLLLGFLCHLLPLLVGY). Topologically, residues 219-238 (LKNGEASAAVLSDMQLSISR) are extracellular. The helical transmembrane segment at 239–259 (GFSIVMLISYIAYLVFQLWTH) threads the bilayer. Topologically, residues 260–281 (RQLFDAQEQEDEYDDDVEQETA) are cytoplasmic. Residues 282 to 302 (VISFWSGFAWLVGMTLVIALL) traverse the membrane as a helical segment. The Extracellular segment spans residues 303-325 (SEYVVATIEEASDKWNLSVSFIS). A glycan (N-linked (GlcNAc...) asparagine) is linked at N318. Residues 326-346 (IILLPIVGNAAEHAGAVIFAF) form a helical membrane-spanning segment. The tract at residues 333–368 (GNAAEHAGAVIFAFKNKLDISLGVALGSATQIGLFV) is cation selection. The Cytoplasmic segment spans residues 347–360 (KNKLDISLGVALGS). Residues 361–381 (ATQIGLFVVPLTIIVAWILGI) traverse the membrane as a helical segment. The Extracellular portion of the chain corresponds to 382-384 (NMD). Residues 385 to 405 (LNFGPLETGCLAVSIIITAFT) form a helical membrane-spanning segment. At 406–411 (LQDGSS) the chain is on the cytoplasmic side. Residues 412-432 (HYMKGLVLLLCYFIIAICFFV) form a helical membrane-spanning segment. Residues 433-463 (DKLPQKQNAIHLGHQAMNNVVTATGGGVFSS) are Extracellular-facing.

This sequence belongs to the Ca(2+):cation antiporter (CaCA) (TC 2.A.19) family. Cation/proton exchanger (CAX) subfamily. As to quaternary structure, interacts with GRXS14 and CXIP4. As to expression, expressed at low levels in leaves, stems and flowers.

It localises to the vacuole membrane. Its activity is regulated as follows. Activated by monothiol glutaredoxin GRXS14 and CXIP4. Inhibited by excess of Ca(2+) and Cd(2+), Na(+) and K(+), but not Mn(2+). Functionally, vacuolar cation/proton exchanger (CAX). Translocates Ca(2+) and other metal ions into vacuoles using the proton gradient formed by H(+)-ATPase and H(+)-pyrophosphatase. Involved in ion homeostasis in association with CAX3. May play a role in cold-acclimation response. The chain is Vacuolar cation/proton exchanger 1 (CAX1) from Arabidopsis thaliana (Mouse-ear cress).